Consider the following 239-residue polypeptide: Putative GEM-like protein 3 (239 aa).

Positions 29 to 68 are disordered; that stretch reads HWNPELVSESPAPDEKALSSSSAARSNPYVARAPTETSDA. The GRAM domain maps to 128–191; sequence KIFRQTFETV…HQLKSVNPSI (64 aa).

The protein belongs to the GEM family.

In Arabidopsis thaliana (Mouse-ear cress), this protein is Putative GEM-like protein 3.